The following is a 996-amino-acid chain: Sarcoplasmic/endoplasmic reticulum calcium ATPase 1 (996 aa).

Residues Met1 to Ser48 are Cytoplasmic-facing. The helical transmembrane segment at Ile49 to Ala69 threads the bilayer. Topologically, residues Cys70 to Val89 are lumenal. The chain crosses the membrane as a helical span at residues Glu90–Arg110. At Asn111–Leu253 the chain is on the cytoplasmic side. Residues Asp254–Ala273 form a helical membrane-spanning segment. The Lumenal portion of the chain corresponds to Ile274–Tyr295. A helical transmembrane segment spans residues Phe296 to Ala313. Ca(2+) is bound by residues Val304, Ala305, Ile307, and Glu309. The Cytoplasmic portion of the chain corresponds to Val314–Met754. Residue Asp351 is the 4-aspartylphosphate intermediate of the active site. Residues Asp351 and Thr353 each contribute to the Mg(2+) site. Residues Thr353, Glu442, Arg489, Lys512, Arg557, Thr622, Gly623, Asp624, Arg675, and Lys681 each contribute to the ATP site. Asp700 serves as a coordination point for Mg(2+). Asn703 is an ATP binding site. The chain crosses the membrane as a helical span at residues Lys755–Leu774. 2 residues coordinate Ca(2+): Asn765 and Glu768. At Thr775–Leu784 the chain is on the lumenal side. Residues Ile785–Gly805 form a helical membrane-spanning segment. The tract at residues Ile785–Gly805 is interaction with PLN. 3 residues coordinate Ca(2+): Asn793, Thr796, and Asp797. At Phe806–Leu825 the chain is on the cytoplasmic side. The chain crosses the membrane as a helical span at residues Ile826–Gly848. Residues Ala849 to Met894 lie on the Lumenal side of the membrane. A disulfide bond links Cys873 and Cys885. The chain crosses the membrane as a helical span at residues Thr895–Ser914. Position 905 (Glu905) interacts with Ca(2+). The Cytoplasmic segment spans residues Glu915–Asn927. The chain crosses the membrane as a helical span at residues Leu928 to Tyr946. Residues Trp929–Leu940 are interaction with PLN. Residues Val947–Phe961 lie on the Lumenal side of the membrane. The helical transmembrane segment at Asp962–Lys982 threads the bilayer. Topologically, residues Phe983–Lys996 are cytoplasmic.

This sequence belongs to the cation transport ATPase (P-type) (TC 3.A.3) family. Type IIA subfamily. As to quaternary structure, interacts with sarcolipin (SLN). Interacts with phospholamban (PLN). Interacts with myoregulin (MRLN). Interacts with DWORF. The cofactor is Mg(2+).

It is found in the endoplasmic reticulum membrane. The protein localises to the sarcoplasmic reticulum membrane. It catalyses the reaction Ca(2+)(in) + ATP + H2O = Ca(2+)(out) + ADP + phosphate + H(+). Its activity is regulated as follows. Inhibited by sarcolipin (SLN) and myoregulin (MRLN). Also shown to be inhibited by phospholamban (PLN) in vitro. Enhanced by DWORF; DWORF increases activity by displacing sarcolipin (SLN), phospholamban (PLN) and myoregulin (MRLN). In terms of biological role, key regulator of striated muscle performance by acting as the major Ca(2+) ATPase responsible for the reuptake of cytosolic Ca(2+) into the sarcoplasmic reticulum. Catalyzes the hydrolysis of ATP coupled with the translocation of calcium from the cytosol to the sarcoplasmic reticulum lumen. Contributes to calcium sequestration involved in muscular excitation/contraction. This Makaira nigricans (Atlantic blue marlin) protein is Sarcoplasmic/endoplasmic reticulum calcium ATPase 1 (atp2a1).